We begin with the raw amino-acid sequence, 537 residues long: Carbamoyl phosphate synthase large chain, C-terminal section (537 aa).

The tract at residues 1-395 (MSKKVVILGS…AYYKAQLSAG (395 aa)) is carbamoyl phosphate synthetic domain. Positions 122–313 (RELIIELGLK…LAKIATKVAI (192 aa)) constitute an ATP-grasp domain. Arginine 158, lysine 197, leucine 199, glutamate 204, glycine 229, valine 230, histidine 231, serine 232, glutamine 272, and glutamate 284 together coordinate ATP. Residues glutamine 272, glutamate 284, and asparagine 286 each contribute to the Mg(2+) site. Mn(2+)-binding residues include glutamine 272, glutamate 284, and asparagine 286. An MGS-like domain is found at 396–537 (YRLPEKGNLF…VHSLQEIYNI (142 aa)). Residues 396-537 (YRLPEKGNLF…VHSLQEIYNI (142 aa)) are allosteric domain.

This sequence belongs to the CarB family. Composed of two chains; the small (or glutamine) chain promotes the hydrolysis of glutamine to ammonia, which is used by the large (or ammonia) chain to synthesize carbamoyl phosphate. Tetramer of heterodimers (alpha,beta)4. It depends on Mg(2+) as a cofactor. Mn(2+) is required as a cofactor.

It catalyses the reaction hydrogencarbonate + L-glutamine + 2 ATP + H2O = carbamoyl phosphate + L-glutamate + 2 ADP + phosphate + 2 H(+). The enzyme catalyses hydrogencarbonate + NH4(+) + 2 ATP = carbamoyl phosphate + 2 ADP + phosphate + 2 H(+). Its pathway is amino-acid biosynthesis; L-arginine biosynthesis; carbamoyl phosphate from bicarbonate: step 1/1. The protein operates within pyrimidine metabolism; UMP biosynthesis via de novo pathway; (S)-dihydroorotate from bicarbonate: step 1/3. Large subunit of the glutamine-dependent carbamoyl phosphate synthetase (CPSase). CPSase catalyzes the formation of carbamoyl phosphate from the ammonia moiety of glutamine, carbonate, and phosphate donated by ATP, constituting the first step of 2 biosynthetic pathways, one leading to arginine and/or urea and the other to pyrimidine nucleotides. The large subunit (synthetase) binds the substrates ammonia (free or transferred from glutamine from the small subunit), hydrogencarbonate and ATP and carries out an ATP-coupled ligase reaction, activating hydrogencarbonate by forming carboxy phosphate which reacts with ammonia to form carbamoyl phosphate. The sequence is that of Carbamoyl phosphate synthase large chain, C-terminal section (carB2) from Aquifex aeolicus (strain VF5).